We begin with the raw amino-acid sequence, 332 residues long: Fructose-1,6-bisphosphatase class 1 1 (332 aa).

Positions 92, 115, 117, and 118 each coordinate Mg(2+). Substrate is bound by residues 118 to 121, Asn-211, Tyr-244, 262 to 264, and Lys-274; these read DGSS and YLY. Residue Glu-280 participates in Mg(2+) binding.

This sequence belongs to the FBPase class 1 family. As to quaternary structure, homotetramer. Mg(2+) is required as a cofactor.

The protein localises to the cytoplasm. It catalyses the reaction beta-D-fructose 1,6-bisphosphate + H2O = beta-D-fructose 6-phosphate + phosphate. It participates in carbohydrate biosynthesis; gluconeogenesis. In Christiangramia forsetii (strain DSM 17595 / CGMCC 1.15422 / KT0803) (Gramella forsetii), this protein is Fructose-1,6-bisphosphatase class 1 1.